Here is a 523-residue protein sequence, read N- to C-terminus: Calcium-dependent protein kinase 28 (523 aa).

G2 carries the N-myristoyl glycine lipid modification. Residue C4 is the site of S-palmitoyl cysteine attachment. The tract at residues 15 to 43 (SSRRSSQTKSKAAPTPIDTKASTKRRTGS) is disordered. Positions 62–322 (YTIGKLLGHG…AAQALSHAWV (261 aa)) constitute a Protein kinase domain. Residues 68–76 (LGHGQFGYT) and K91 contribute to the ATP site. Residue D188 is the Proton acceptor of the active site. Phosphoserine is present on residues S228 and S318. The segment at 328–358 (ATDIPVDISVLNNLRQFVRYSRLKQFALRAL) is autoinhibitory domain. EF-hand domains lie at 365–400 (AEIS…DLPW), 402–437 (LKDS…VHQL), 444–479 (KWQL…RGSI), and 482–509 (LLDE…ASIS). Ca(2+) is bound by residues D378, D380, N382, E389, D415, N417, D419, E426, D457, D459, D461, Y463, E468, D487, D489, D491, and K493. The residue at position 495 (S495) is a Phosphoserine. E498 is a Ca(2+) binding site. S515 carries the phosphoserine modification.

This sequence belongs to the protein kinase superfamily. Ser/Thr protein kinase family. CDPK subfamily. In terms of assembly, interacts with BIK1. Expressed in vascular and meristematic tissues throughout plant development.

The protein resides in the cell membrane. The catalysed reaction is L-seryl-[protein] + ATP = O-phospho-L-seryl-[protein] + ADP + H(+). It carries out the reaction L-threonyl-[protein] + ATP = O-phospho-L-threonyl-[protein] + ADP + H(+). With respect to regulation, activated by calcium. Autophosphorylation plays an important role in the regulation of the kinase activity. In terms of biological role, may play a role in signal transduction pathways that involve calcium as a second messenger. Acts as a developmentally controlled regulator for coordinated stem elongation and vascular development. Acts as a key component which contributes to the developmental switch that establishes the transition from vegetative to reproductive growth. Involved in pathogen-associated molecular pattern (PAMP)-triggered immunity (PTI) signaling. Interacts with and phosphorylates the kinase BIK1, a central rate-limiting kinase in PTI signaling. Facilitates BIK1 turnover and negatively regulates BIK1-mediated immune responses triggered by several PAMPs. Its kinase activity is necessary and sufficient for its function in PTI signaling. This is Calcium-dependent protein kinase 28 from Arabidopsis thaliana (Mouse-ear cress).